The sequence spans 125 residues: MRRVLITGSRVWKDRTTVWDALADELHRSPYGLVVVHGGARGADDIADRWAWGMRQEGFNVTPELHRADWEWHGKKAGVLRNIEMVRAGADVCLAFPLGRSVGTRHCMREAQKAGIPVINFGDKP.

This is Gene 61 protein (61) from Mycobacterium phage D29 (Mycobacteriophage D29).